The sequence spans 466 residues: UDP-N-acetylmuramoylalanine--D-glutamate ligase (466 aa).

121–127 (GTNGKST) is a binding site for ATP.

It belongs to the MurCDEF family.

The protein resides in the cytoplasm. The catalysed reaction is UDP-N-acetyl-alpha-D-muramoyl-L-alanine + D-glutamate + ATP = UDP-N-acetyl-alpha-D-muramoyl-L-alanyl-D-glutamate + ADP + phosphate + H(+). It functions in the pathway cell wall biogenesis; peptidoglycan biosynthesis. Cell wall formation. Catalyzes the addition of glutamate to the nucleotide precursor UDP-N-acetylmuramoyl-L-alanine (UMA). In Mesorhizobium japonicum (strain LMG 29417 / CECT 9101 / MAFF 303099) (Mesorhizobium loti (strain MAFF 303099)), this protein is UDP-N-acetylmuramoylalanine--D-glutamate ligase.